We begin with the raw amino-acid sequence, 514 residues long: Beta-glucosidase 16 (514 aa).

The signal sequence occupies residues Met1 to Ala21. Gln49 provides a ligand contact to a beta-D-glucoside. Asn80 is a glycosylation site (N-linked (GlcNAc...) asparagine). Residues His153 and Asn198–Glu199 each bind a beta-D-glucoside. The active-site Proton donor is the Glu199. A disulfide bridge links Cys218 with Cys226. Tyr343 contacts a beta-D-glucoside. N-linked (GlcNAc...) asparagine glycosylation occurs at Asn357. Residues Glu413, Trp458, Glu465–Trp466, and Phe474 each bind a beta-D-glucoside. Residue Glu413 is the Nucleophile of the active site.

This sequence belongs to the glycosyl hydrolase 1 family. Expressed at low levels in cauline leaves and flowers.

It carries out the reaction Hydrolysis of terminal, non-reducing beta-D-glucosyl residues with release of beta-D-glucose.. The polypeptide is Beta-glucosidase 16 (Arabidopsis thaliana (Mouse-ear cress)).